The following is a 337-amino-acid chain: Adenylosuccinate synthetase (337 aa).

Residues 12 to 18 (GDEGKGK) and 42 to 44 (GHT) each bind GTP. Catalysis depends on aspartate 13, which acts as the Proton acceptor. Positions 13 and 42 each coordinate Mg(2+). Residues 13–16 (DEGK), 40–43 (NAGH), threonine 127, arginine 141, glutamine 179, threonine 194, and arginine 256 contribute to the IMP site. Histidine 43 functions as the Proton donor in the catalytic mechanism. Residue 252 to 258 (TVTGRRR) coordinates substrate. GTP is bound by residues arginine 258, 284–286 (CLD), and 324–326 (STG).

The protein belongs to the adenylosuccinate synthetase family. In terms of assembly, homodimer. The cofactor is Mg(2+).

The protein localises to the cytoplasm. The catalysed reaction is IMP + L-aspartate + GTP = N(6)-(1,2-dicarboxyethyl)-AMP + GDP + phosphate + 2 H(+). It participates in purine metabolism; AMP biosynthesis via de novo pathway; AMP from IMP: step 1/2. In terms of biological role, plays an important role in the de novo pathway of purine nucleotide biosynthesis. Catalyzes the first committed step in the biosynthesis of AMP from IMP. This Methanococcus maripaludis (strain C6 / ATCC BAA-1332) protein is Adenylosuccinate synthetase.